A 477-amino-acid polypeptide reads, in one-letter code: Serine/threonine protein phosphatase 2A 55 kDa regulatory subunit B' delta isoform (477 aa).

This sequence belongs to the phosphatase 2A regulatory subunit B56 family. PP2A consists of a common heteromeric enzyme, composed of a catalytic subunit (subunits C), a constant regulatory subunit (subunit A), and a variety of regulatory subunits such as subunits B (the R2/B/PR55/B55, R3/B''/PR72/PR130/PR59 and R5/B'/B56 families). Interacts with SRK2E/OST1. As to expression, expressed ubiquitously.

It localises to the cytoplasm. In terms of biological role, the B regulatory subunit may modulate substrate selectivity and catalytic activity, and may also direct the localization of the catalytic enzyme to a particular subcellular compartment. The polypeptide is Serine/threonine protein phosphatase 2A 55 kDa regulatory subunit B' delta isoform (B'DELTA) (Arabidopsis thaliana (Mouse-ear cress)).